We begin with the raw amino-acid sequence, 212 residues long: Acyl-homoserine-lactone synthase (212 aa).

The protein belongs to the autoinducer synthase family.

It carries out the reaction a fatty acyl-[ACP] + S-adenosyl-L-methionine = an N-acyl-L-homoserine lactone + S-methyl-5'-thioadenosine + holo-[ACP] + H(+). Its function is as follows. Required for the synthesis of OHHL (N-(3-oxohexanoyl)-L-homoserine lactone), an autoinducer molecule which binds to ExpR and thus acts in virulence (soft rot disease) through the activation of genes for plant tissue macerating enzymes. This is Acyl-homoserine-lactone synthase (expI) from Dickeya dadantii (strain 3937) (Erwinia chrysanthemi (strain 3937)).